The chain runs to 880 residues: Leucine--tRNA ligase (880 aa).

Positions 46–56 match the 'HIGH' region motif; sequence PYPSGALHMGH. The 'KMSKS' region signature appears at 638 to 642; it reads KMSKS. Lys-641 provides a ligand contact to ATP.

Belongs to the class-I aminoacyl-tRNA synthetase family.

The protein resides in the cytoplasm. The enzyme catalyses tRNA(Leu) + L-leucine + ATP = L-leucyl-tRNA(Leu) + AMP + diphosphate. In Stenotrophomonas maltophilia (strain R551-3), this protein is Leucine--tRNA ligase.